The primary structure comprises 668 residues: Probable serine/threonine-protein kinase abkB (668 aa).

Disordered regions lie at residues tyrosine 88–alanine 111 and glutamate 132–lysine 162. Residues isoleucine 91–serine 105 show a composition bias toward polar residues. Residues lysine 131–serine 163 are a coiled coil. Positions isoleucine 138–lysine 162 are enriched in basic and acidic residues. Positions aspartate 314–histidine 668 constitute a Protein kinase domain. ATP-binding positions include isoleucine 320 to valine 328 and lysine 346. The active-site Proton acceptor is aspartate 478.

Belongs to the protein kinase superfamily. ADCK protein kinase family.

The protein is Probable serine/threonine-protein kinase abkB (abkB) of Dictyostelium discoideum (Social amoeba).